We begin with the raw amino-acid sequence, 958 residues long: UvrABC system protein A (958 aa).

An ABC transporter 1 domain is found at 1-232 (MQSKSIKIQG…IETALKLGEG (232 aa)). 33 to 40 (GLSGSGKS) lines the ATP pocket. The C4-type zinc-finger motif lies at 252–279 (CPICGFSIGELEPRLFSFNSPFGACPSC). 2 consecutive ABC transporter domains span residues 315–593 (QYYP…KYLS) and 604–935 (RRKP…GKYL). ATP is bound at residue 639–646 (GVSGSGKS). The segment at 738–764 (CEACRGDGILKIEMHFLPDVYVPCEVC) adopts a C4-type zinc-finger fold.

The protein belongs to the ABC transporter superfamily. UvrA family. In terms of assembly, forms a heterotetramer with UvrB during the search for lesions.

Its subcellular location is the cytoplasm. In terms of biological role, the UvrABC repair system catalyzes the recognition and processing of DNA lesions. UvrA is an ATPase and a DNA-binding protein. A damage recognition complex composed of 2 UvrA and 2 UvrB subunits scans DNA for abnormalities. When the presence of a lesion has been verified by UvrB, the UvrA molecules dissociate. In Oceanobacillus iheyensis (strain DSM 14371 / CIP 107618 / JCM 11309 / KCTC 3954 / HTE831), this protein is UvrABC system protein A.